The following is a 526-amino-acid chain: NAD(P)H-quinone oxidoreductase subunit 2 (526 aa).

Transmembrane regions (helical) follow at residues 16 to 36 (ILPE…DLIV), 43 to 63 (WIPY…YLGW), 80 to 100 (LSIL…MMSV), 107 to 127 (GTAL…GMFL), 133 to 153 (LVMI…LTGY), 168 to 188 (LLIG…LYGL), 211 to 231 (LALA…ISAV), 245 to 265 (PTPV…ALAI), 279 to 299 (WHFI…VVAL), 307 to 327 (MLAY…VAGT), 335 to 355 (IFYL…VILF), 379 to 399 (LGLS…GFFG), 401 to 421 (IYLF…LGLI), and 469 to 489 (LVLS…LFVI).

The protein belongs to the complex I subunit 2 family. NDH-1 can be composed of about 15 different subunits; different subcomplexes with different compositions have been identified which probably have different functions.

The protein localises to the cellular thylakoid membrane. The catalysed reaction is a plastoquinone + NADH + (n+1) H(+)(in) = a plastoquinol + NAD(+) + n H(+)(out). It catalyses the reaction a plastoquinone + NADPH + (n+1) H(+)(in) = a plastoquinol + NADP(+) + n H(+)(out). Its function is as follows. NDH-1 shuttles electrons from an unknown electron donor, via FMN and iron-sulfur (Fe-S) centers, to quinones in the respiratory and/or the photosynthetic chain. The immediate electron acceptor for the enzyme in this species is believed to be plastoquinone. Couples the redox reaction to proton translocation, and thus conserves the redox energy in a proton gradient. Cyanobacterial NDH-1 also plays a role in inorganic carbon-concentration. In Picosynechococcus sp. (strain ATCC 27264 / PCC 7002 / PR-6) (Agmenellum quadruplicatum), this protein is NAD(P)H-quinone oxidoreductase subunit 2.